The sequence spans 150 residues: 3-dehydroquinate dehydratase (150 aa).

The active-site Proton acceptor is Tyr-26. Residues Asn-77, His-83, and Asp-90 each coordinate substrate. The active-site Proton donor is His-103. Substrate-binding positions include 104–105 and Arg-114; that span reads IS.

The protein belongs to the type-II 3-dehydroquinase family. As to quaternary structure, homododecamer.

It catalyses the reaction 3-dehydroquinate = 3-dehydroshikimate + H2O. It functions in the pathway metabolic intermediate biosynthesis; chorismate biosynthesis; chorismate from D-erythrose 4-phosphate and phosphoenolpyruvate: step 3/7. Functionally, catalyzes a trans-dehydration via an enolate intermediate. In Buchnera aphidicola subsp. Acyrthosiphon pisum (strain 5A), this protein is 3-dehydroquinate dehydratase.